A 245-amino-acid polypeptide reads, in one-letter code: Phosphoribosylaminoimidazole-succinocarboxamide synthase (245 aa).

This sequence belongs to the SAICAR synthetase family.

The enzyme catalyses 5-amino-1-(5-phospho-D-ribosyl)imidazole-4-carboxylate + L-aspartate + ATP = (2S)-2-[5-amino-1-(5-phospho-beta-D-ribosyl)imidazole-4-carboxamido]succinate + ADP + phosphate + 2 H(+). It functions in the pathway purine metabolism; IMP biosynthesis via de novo pathway; 5-amino-1-(5-phospho-D-ribosyl)imidazole-4-carboxamide from 5-amino-1-(5-phospho-D-ribosyl)imidazole-4-carboxylate: step 1/2. The protein is Phosphoribosylaminoimidazole-succinocarboxamide synthase of Nostoc sp. (strain PCC 7120 / SAG 25.82 / UTEX 2576).